The following is a 252-amino-acid chain: tRNA (guanine-N(1)-)-methyltransferase (252 aa).

S-adenosyl-L-methionine-binding positions include glycine 113 and 133-138 (IGDYVL).

The protein belongs to the RNA methyltransferase TrmD family. As to quaternary structure, homodimer.

The protein resides in the cytoplasm. It carries out the reaction guanosine(37) in tRNA + S-adenosyl-L-methionine = N(1)-methylguanosine(37) in tRNA + S-adenosyl-L-homocysteine + H(+). Specifically methylates guanosine-37 in various tRNAs. The sequence is that of tRNA (guanine-N(1)-)-methyltransferase from Xanthomonas campestris pv. campestris (strain 8004).